Reading from the N-terminus, the 235-residue chain is Sugar fermentation stimulation protein homolog (235 aa).

Belongs to the SfsA family.

This Photorhabdus laumondii subsp. laumondii (strain DSM 15139 / CIP 105565 / TT01) (Photorhabdus luminescens subsp. laumondii) protein is Sugar fermentation stimulation protein homolog.